We begin with the raw amino-acid sequence, 729 residues long: Rho GTPase-activating protein 28 (729 aa).

Disordered stretches follow at residues 20 to 42 and 55 to 105; these read AQPP…LSRK and SNES…AEVT. Residues 65–75 show a composition bias toward polar residues; it reads SRSNSEASVDS. S72 is modified (phosphoserine). Residues 80 to 89 are compositionally biased toward basic and acidic residues; that stretch reads DFWREIESIK. T159 bears the Phosphothreonine mark. Residues 176–236 are disordered; sequence GVSESPPRDT…SQDKEGSFAV (61 aa). Over residues 195–204 the composition is skewed to basic and acidic residues; it reads GTKEERELPR. A compositionally biased stretch (polar residues) spans 217–226; sequence SLNSTTLSDA. Positions 380-577 constitute a Rho-GAP domain; the sequence is VPLTVLLDGD…LMLKYQKILW (198 aa). The disordered stretch occupies residues 612–631; the sequence is TLERETASPKTSKVLQKSPS. Polar residues predominate over residues 619-630; the sequence is SPKTSKVLQKSP.

In terms of tissue distribution, expressed in testis. Expressed at moderate level in kidney and ovary, and weakly expressed in spleen and skeletal muscle.

GTPase activator for the Rho-type GTPases by converting them to an inactive GDP-bound state. This Homo sapiens (Human) protein is Rho GTPase-activating protein 28 (ARHGAP28).